We begin with the raw amino-acid sequence, 379 residues long: Endonuclease III homolog 1, chloroplastic (379 aa).

A chloroplast-targeting transit peptide spans 1–54; it reads MILLVNGGAATSIHPNAARFYRIGTMSRQIHGAVSSSKHISLKTQHPLSDSNSE. In terms of domain architecture, HhH spans 244–272; that stretch reads KYDGDIPSSLDDLLSLPGIGPKMAHLILH. Lys-265 serves as the catalytic Nucleophile; for N-glycosylase activity. [4Fe-4S] cluster contacts are provided by Cys-340, Cys-347, Cys-350, and Cys-356.

This sequence belongs to the Nth/MutY family. It depends on [4Fe-4S] cluster as a cofactor. In terms of tissue distribution, expressed at low levels in roots, stems, leaves and flowers.

Its subcellular location is the plastid. It is found in the chloroplast stroma. The protein localises to the chloroplast nucleoid. The catalysed reaction is 2'-deoxyribonucleotide-(2'-deoxyribose 5'-phosphate)-2'-deoxyribonucleotide-DNA = a 3'-end 2'-deoxyribonucleotide-(2,3-dehydro-2,3-deoxyribose 5'-phosphate)-DNA + a 5'-end 5'-phospho-2'-deoxyribonucleoside-DNA + H(+). Its function is as follows. Bifunctional DNA N-glycosylase with associated apurinic/apyrimidinic (AP) lyase function that catalyzes the first step in base excision repair (BER), the primary repair pathway for the repair of oxidative DNA damage. The DNA N-glycosylase activity releases the damaged DNA base from DNA by cleaving the N-glycosidic bond, leaving an AP site. The AP lyase activity cleaves the phosphodiester bond 3' to the AP site by a beta-elimination. Primarily recognizes and repairs oxidative base damage of pyrimidines. This is Endonuclease III homolog 1, chloroplastic from Arabidopsis thaliana (Mouse-ear cress).